The following is a 151-amino-acid chain: Late embryogenesis abundant protein Lea14-A (151 aa).

This sequence belongs to the LEA type 2 family.

This Gossypium hirsutum (Upland cotton) protein is Late embryogenesis abundant protein Lea14-A (LEA14-A).